The primary structure comprises 385 residues: Acetate kinase (385 aa).

Mg(2+) is bound at residue asparagine 9. Lysine 16 provides a ligand contact to ATP. Arginine 87 provides a ligand contact to substrate. Aspartate 144 functions as the Proton donor/acceptor in the catalytic mechanism. Residues 202–206 (HLGSG) and 277–279 (DMR) each bind ATP. A Mg(2+)-binding site is contributed by glutamate 373.

It belongs to the acetokinase family. As to quaternary structure, homodimer. It depends on Mg(2+) as a cofactor. Requires Mn(2+) as cofactor.

Its subcellular location is the cytoplasm. The enzyme catalyses acetate + ATP = acetyl phosphate + ADP. Its pathway is metabolic intermediate biosynthesis; acetyl-CoA biosynthesis; acetyl-CoA from acetate: step 1/2. Catalyzes the formation of acetyl phosphate from acetate and ATP. Can also catalyze the reverse reaction. The sequence is that of Acetate kinase from Rickettsia prowazekii (strain Madrid E).